The chain runs to 81 residues: Sulfur carrier protein TusA (81 aa).

The Cysteine persulfide intermediate role is filled by C19.

It belongs to the sulfur carrier protein TusA family. In terms of assembly, interacts with IscS.

Its subcellular location is the cytoplasm. Its pathway is tRNA modification. Sulfur carrier protein involved in sulfur trafficking in the cell. Part of a sulfur-relay system required for 2-thiolation during synthesis of 2-thiouridine of the modified wobble base 5-methylaminomethyl-2-thiouridine (mnm(5)s(2)U) in tRNA. Interacts with IscS and stimulates its cysteine desulfurase activity. Accepts an activated sulfur from IscS, which is then transferred to TusD, and thus determines the direction of sulfur flow from IscS to 2-thiouridine formation. Also appears to be involved in sulfur transfer for the biosynthesis of molybdopterin. The chain is Sulfur carrier protein TusA from Erwinia tasmaniensis (strain DSM 17950 / CFBP 7177 / CIP 109463 / NCPPB 4357 / Et1/99).